The sequence spans 448 residues: Adenylosuccinate synthetase (448 aa).

GTP is bound by residues 36–42 and 64–66; these read GDEGKGK and GHT. The active-site Proton acceptor is aspartate 37. The Mg(2+) site is built by aspartate 37 and glycine 64. Residues 37-40, 62-65, threonine 154, arginine 168, asparagine 246, threonine 261, and arginine 325 each bind IMP; these read DEGK and NAGH. The active-site Proton donor is the histidine 65. 321–327 provides a ligand contact to substrate; it reads VTTKRKR. GTP is bound by residues arginine 327, 353 to 355, and 436 to 438; these read KLD and GVG.

The protein belongs to the adenylosuccinate synthetase family. As to quaternary structure, homodimer. Requires Mg(2+) as cofactor.

It localises to the cytoplasm. The enzyme catalyses IMP + L-aspartate + GTP = N(6)-(1,2-dicarboxyethyl)-AMP + GDP + phosphate + 2 H(+). The protein operates within purine metabolism; AMP biosynthesis via de novo pathway; AMP from IMP: step 1/2. Functionally, plays an important role in the de novo pathway and in the salvage pathway of purine nucleotide biosynthesis. Catalyzes the first committed step in the biosynthesis of AMP from IMP. This is Adenylosuccinate synthetase from Drosophila mojavensis (Fruit fly).